The primary structure comprises 381 residues: Carbamoyl phosphate synthase small chain (381 aa).

Residues 1-192 (MSKPAILALE…SGYADVSQGD (192 aa)) form a CPSase region. L-glutamine contacts are provided by Ser47, Gly244, and Gly246. One can recognise a Glutamine amidotransferase type-1 domain in the interval 196 to 381 (HVVAYDYGMK…RFVEMMRHRR (186 aa)). The active-site Nucleophile is Cys272. Leu273, Gln276, Asn314, Gly316, and Phe317 together coordinate L-glutamine. Residues His356 and Glu358 contribute to the active site.

The protein belongs to the CarA family. Composed of two chains; the small (or glutamine) chain promotes the hydrolysis of glutamine to ammonia, which is used by the large (or ammonia) chain to synthesize carbamoyl phosphate. Tetramer of heterodimers (alpha,beta)4.

It carries out the reaction hydrogencarbonate + L-glutamine + 2 ATP + H2O = carbamoyl phosphate + L-glutamate + 2 ADP + phosphate + 2 H(+). The catalysed reaction is L-glutamine + H2O = L-glutamate + NH4(+). It participates in amino-acid biosynthesis; L-arginine biosynthesis; carbamoyl phosphate from bicarbonate: step 1/1. The protein operates within pyrimidine metabolism; UMP biosynthesis via de novo pathway; (S)-dihydroorotate from bicarbonate: step 1/3. In terms of biological role, small subunit of the glutamine-dependent carbamoyl phosphate synthetase (CPSase). CPSase catalyzes the formation of carbamoyl phosphate from the ammonia moiety of glutamine, carbonate, and phosphate donated by ATP, constituting the first step of 2 biosynthetic pathways, one leading to arginine and/or urea and the other to pyrimidine nucleotides. The small subunit (glutamine amidotransferase) binds and cleaves glutamine to supply the large subunit with the substrate ammonia. This Halomonas eurihalina protein is Carbamoyl phosphate synthase small chain.